We begin with the raw amino-acid sequence, 207 residues long: Serotonin N-acetyltransferase (207 aa).

The interval 1–28 (MSMQSTHPPKPEAPRLPPGIPESPSCQR) is disordered. Threonine 31 carries the post-translational modification Phosphothreonine; by PKA. An N-acetyltransferase domain is found at 35 to 202 (SEFRCLTPED…CSLRDHPFLR (168 aa)). Leucine 124 serves as a coordination point for substrate. Acetyl-CoA-binding positions include 124–126 (LAV) and 132–137 (QQGRGP). Residue methionine 159 participates in substrate binding. Residue 168-170 (YER) coordinates acetyl-CoA. Serine 205 is modified (phosphoserine).

This sequence belongs to the acetyltransferase family. AANAT subfamily. In terms of assembly, monomer. Interacts with several 14-3-3 proteins, including YWHAB, YWHAE, YWHAG and YWHAZ, preferentially when phosphorylated at Thr-31. Phosphorylation on Ser-205 also allows binding to YWHAZ, but with lower affinity. The interaction with YWHAZ considerably increases affinity for arylalkylamines and acetyl-CoA and protects the enzyme from dephosphorylation and proteasomal degradation. It may also prevent thiol-dependent inactivation. CAMP-dependent phosphorylation on both N-terminal Thr-31 and C-terminal Ser-205 regulates AANAT activity by promoting interaction with 14-3-3 proteins.

The protein localises to the cytoplasm. The enzyme catalyses a 2-arylethylamine + acetyl-CoA = an N-acetyl-2-arylethylamine + CoA + H(+). It functions in the pathway aromatic compound metabolism; melatonin biosynthesis; melatonin from serotonin: step 1/2. Functionally, controls the night/day rhythm of melatonin production in the pineal gland. Catalyzes the N-acetylation of serotonin into N-acetylserotonin, the penultimate step in the synthesis of melatonin. This chain is Serotonin N-acetyltransferase (AANAT), found in Pan troglodytes (Chimpanzee).